The following is a 226-amino-acid chain: Isoprenyl transferase (226 aa).

D12 is a catalytic residue. D12 is a binding site for Mg(2+). Residues 13-16 (GNAR), W17, K25, H29, and 57-59 (SSE) contribute to the substrate site. Residue N60 is the Proton acceptor of the active site. Substrate is bound by residues W61, R63, R174, and 180-182 (RIS). A Mg(2+)-binding site is contributed by E193.

This sequence belongs to the UPP synthase family. In terms of assembly, homodimer. Mg(2+) serves as cofactor.

Its function is as follows. Catalyzes the condensation of isopentenyl diphosphate (IPP) with allylic pyrophosphates generating different type of terpenoids. The polypeptide is Isoprenyl transferase (Rickettsia sibirica (strain ATCC VR-151 / 246)).